Consider the following 342-residue polypeptide: [Citrate [pro-3S]-lyase] ligase (342 aa).

One can recognise an N-acetyltransferase domain in the interval 1-127; that stretch reads MTLILKRVQL…RAVLMENSRE (127 aa).

It catalyses the reaction holo-[citrate lyase ACP] + acetate + ATP = acetyl-[citrate lyase ACP] + AMP + diphosphate. Acetylation of prosthetic group (2-(5''-phosphoribosyl)-3'-dephosphocoenzyme-A) of the gamma subunit of citrate lyase. The polypeptide is [Citrate [pro-3S]-lyase] ligase (citC) (Klebsiella pneumoniae).